A 153-amino-acid chain; its full sequence is Large ribosomal subunit protein uL22 (153 aa).

This sequence belongs to the universal ribosomal protein uL22 family. In terms of assembly, part of the 50S ribosomal subunit.

Its function is as follows. This protein binds specifically to 23S rRNA. It makes multiple contacts with different domains of the 23S rRNA in the assembled 50S subunit and ribosome. Functionally, the globular domain of the protein is located near the polypeptide exit tunnel on the outside of the subunit, while an extended beta-hairpin is found that lines the wall of the exit tunnel in the center of the 70S ribosome. The protein is Large ribosomal subunit protein uL22 of Methanoculleus marisnigri (strain ATCC 35101 / DSM 1498 / JR1).